The primary structure comprises 109 residues: MLSVSRAATRMTGMVARFSAGGHGDGAGRGGGSGGSIRDAGGAFGKMEAAREDEYFYKKQKAQLQELREHIQEEVKHHEGQLENHKKVLERHQQRISEIEAQERALGKE.

Disordered regions lie at residues 18–39 (FSAG…SIRD) and 73–109 (EEVK…LGKE). Over residues 21 to 35 (GGHGDGAGRGGGSGG) the composition is skewed to gly residues. A coiled-coil region spans residues 55–109 (YFYKKQKAQLQELREHIQEEVKHHEGQLENHKKVLERHQQRISEIEAQERALGKE).

The protein belongs to the ATPase inhibitor family.

The protein localises to the mitochondrion. Thought to be a regulatory component of the ATP-synthesizing complex in the mitochondria. Activity is pH dependent. The chain is ATPase inhibitor mai-2, mitochondrial (mai-2) from Caenorhabditis elegans.